Here is a 504-residue protein sequence, read N- to C-terminus: Multidrug efflux pump LfrA (504 aa).

14 consecutive transmembrane segments (helical) span residues 19–39, 58–78, 87–107, 110–130, 145–165, 172–192, 206–226, 233–253, 275–295, 309–329, 338–358, 361–381, 408–428, and 480–500; these read WVALAVLALPVLLIAIDNTVL, LWIVDVYSLVLAALLVAMGSL, LLLIGGAGFAVVSALAAFAPS, LLVGARALLGVFGAMLMPSTL, LAIAIWASCFTAGSALGPIVG, FHWGAVFLVAVPILLPLLVLG, PFDPVSIVLSFTTMLPIVWAV, GLSAAAAAAFAVGIVSGALFV, TSSILANFLSIIGLIGFIFFI, TAGLVTLPGAVVSMIAGLAVV, DTLMVTGLVFVAVGFLMILLF, NLTVAAIIASFVVLELGVGVS, AYELGAVVGTATLGTIFTAFY, and IAPTAVIAAMLVLAAAAVVGV.

It belongs to the major facilitator superfamily.

It is found in the cell inner membrane. With respect to regulation, inhibited by the protonophore carbonyl cyanide m-chorophenylhydrazone (CCCP). Ethidium bromide efflux is inhibited by chlorpromazine, thioridazine and verapamil. Its function is as follows. Energy-dependent efflux pump that contributes to drug resistance. Catalyzes the efflux of norfloxacin and several related fluoroquinolones (FQ). Contributes significantly to the intrinsic MICs for ethidium bromide and acriflavine. Overexpression confers low-level resistance to hydrophilic FQ such as ciprofloxacin, ofloxacin and levofloxacin, and to ethidium bromide, acridine, acriflavine, rhodamine 123 and some quaternary ammonium compounds. May contribute to resistance to certain beta-lactams. Probably uses the proton motive force to export drugs. The polypeptide is Multidrug efflux pump LfrA (Mycolicibacterium smegmatis (strain ATCC 700084 / mc(2)155) (Mycobacterium smegmatis)).